The chain runs to 310 residues: Nuclear hormone receptor family member nhr-89 (310 aa).

Residues 5 to 79 constitute a DNA-binding region (nuclear receptor); it reads EGPCRVCHSV…SGMRRDCVRK (75 aa). NR C4-type zinc fingers lie at residues 8 to 29 and 43 to 67; these read CRVC…CMSC and CPAN…YNKC. One can recognise an NR LBD domain in the interval 101–310; sequence KLSESYEELL…TLHQKYQIPF (210 aa).

Belongs to the nuclear hormone receptor family.

It is found in the nucleus. Functionally, orphan nuclear receptor. This Caenorhabditis elegans protein is Nuclear hormone receptor family member nhr-89 (nhr-89).